Reading from the N-terminus, the 307-residue chain is Haloalkane dehalogenase (307 aa).

An AB hydrolase-1 domain is found at 34–158 (PVLFLHGNPT…FQAFRTADVG (125 aa)). Catalysis depends on Asp106, which acts as the Nucleophile. Glu130 serves as the catalytic Proton donor. His272 (proton acceptor) is an active-site residue.

This sequence belongs to the haloalkane dehalogenase family. Type 2 subfamily. In terms of assembly, monomer.

The enzyme catalyses 1-haloalkane + H2O = a halide anion + a primary alcohol + H(+). Its pathway is xenobiotic degradation; 1,2-dibromoethane degradation. Functionally, catalyzes hydrolytic cleavage of carbon-halogen bonds in halogenated aliphatic compounds, leading to the formation of the corresponding primary alcohols, halide ions and protons. Has a broad substrate specificity, which includes mono- and di-chlorinated and brominated alkanes. The highest activity was found with 1,2-dibromoethane, whereas low activity was measured with the analog 1,2-dichloroethane. The chain is Haloalkane dehalogenase (dhaAF) from Mycobacterium sp. (strain GP1).